The primary structure comprises 146 residues: uncharacterized protein (146 aa).

Transmembrane regions (helical) follow at residues 5-27, 32-49, 61-80, 90-108, and 120-142; these read GAMVLLTMLILYAAPSFALYGLA, FVYVGAIMIVAFGVYIIL, LAVMLISALTAIFLAYFFSG, SLGLFAVVAAMLLALARVF, and FFLKWILVVAITFTILSVFMLFL.

It is found in the cell membrane. This is an uncharacterized protein from Archaeoglobus fulgidus (strain ATCC 49558 / DSM 4304 / JCM 9628 / NBRC 100126 / VC-16).